The sequence spans 498 residues: Phenylalanine--tRNA ligase alpha subunit (498 aa).

Residues T328, 372–374, and Y412 contribute to the L-phenylalanine site; that span reads QVE. E414 is a Mg(2+) binding site. Residue F438 coordinates L-phenylalanine.

Belongs to the class-II aminoacyl-tRNA synthetase family. Phe-tRNA synthetase alpha subunit type 2 subfamily. In terms of assembly, tetramer of two alpha and two beta subunits. Mg(2+) serves as cofactor.

The protein resides in the cytoplasm. The enzyme catalyses tRNA(Phe) + L-phenylalanine + ATP = L-phenylalanyl-tRNA(Phe) + AMP + diphosphate + H(+). The sequence is that of Phenylalanine--tRNA ligase alpha subunit from Drosophila melanogaster (Fruit fly).